A 169-amino-acid polypeptide reads, in one-letter code: MSKPICSTGLRWLWLAVLVVIVDLSSKQWVMTHFALYESVPLIPFFNLTYAQNFGAAFSFLADKSGWQRWFFAGIAIGISVLLMVLMYRSTAKQRLLNCAYALIIGGALGNLFDRMVHGAVIDFIDFHVNNWHFPTFNIADTAICIGAALVIFEGFISPAEKTAMNKGE.

4 helical membrane passes run 4–24 (PICS…IVDL), 42–62 (LIPF…SFLA), 70–90 (WFFA…MYRS), and 102–122 (ALII…GAVI). Residues D123 and D141 contribute to the active site. A helical membrane pass occupies residues 137–157 (FNIADTAICIGAALVIFEGFI).

This sequence belongs to the peptidase A8 family.

It is found in the cell inner membrane. It catalyses the reaction Release of signal peptides from bacterial membrane prolipoproteins. Hydrolyzes -Xaa-Yaa-Zaa-|-(S,diacylglyceryl)Cys-, in which Xaa is hydrophobic (preferably Leu), and Yaa (Ala or Ser) and Zaa (Gly or Ala) have small, neutral side chains.. Its pathway is protein modification; lipoprotein biosynthesis (signal peptide cleavage). Functionally, this protein specifically catalyzes the removal of signal peptides from prolipoproteins. This is Lipoprotein signal peptidase from Yersinia enterocolitica serotype O:8 / biotype 1B (strain NCTC 13174 / 8081).